A 1171-amino-acid chain; its full sequence is ATP-dependent helicase/deoxyribonuclease subunit B (1171 aa).

The region spanning 1 to 301 (MSLRFVIGRA…AHLEMHYEAR (301 aa)) is the UvrD-like helicase ATP-binding domain. Position 8–15 (8–15 (GRAGSGKS)) interacts with ATP. Residues 281-587 (MKQPRFHSQA…QFANIPPSLD (307 aa)) enclose the UvrD-like helicase C-terminal domain. Positions 805, 1129, 1132, and 1138 each coordinate [4Fe-4S] cluster.

This sequence belongs to the helicase family. AddB/RexB type 1 subfamily. As to quaternary structure, heterodimer of AddA and AddB. The cofactor is Mg(2+). Requires [4Fe-4S] cluster as cofactor.

In terms of biological role, the heterodimer acts as both an ATP-dependent DNA helicase and an ATP-dependent, dual-direction single-stranded exonuclease. Recognizes the chi site generating a DNA molecule suitable for the initiation of homologous recombination. The AddB subunit has 5' -&gt; 3' nuclease activity but not helicase activity. The chain is ATP-dependent helicase/deoxyribonuclease subunit B from Bacillus mycoides (strain KBAB4) (Bacillus weihenstephanensis).